Reading from the N-terminus, the 243-residue chain is HTH-type transcriptional regulator MlrA (243 aa).

In terms of domain architecture, HTH merR-type spans 3–72; that stretch reads LYTIGEVALL…VSKVKVLLSS (70 aa). The H-T-H motif DNA-binding region spans 6-25; the sequence is IGEVALLCDINPVTLRAWQR.

Transcriptional activator of csgD, which is required for production of the curli (AgF). The sequence is that of HTH-type transcriptional regulator MlrA from Salmonella typhimurium (strain SL1344).